The following is a 340-amino-acid chain: Glutaminyl-peptide cyclotransferase (340 aa).

Positions 1–23 (MAIGSVVFAAAGLLLLLLPPSHQ) are cleaved as a signal peptide. N-linked (GlcNAc...) asparagine glycosylation is present at Asn42. Positions 85 and 91 each coordinate alpha-D-mannopyranose. Cys113 and Cys136 are oxidised to a cystine. Asp131 contributes to the Zn(2+) binding site. Alpha-D-mannopyranose-binding residues include Gln151 and Arg155. Residue Asn156 is glycosylated (N-linked (GlcNAc...) asparagine). Catalysis depends on Glu170, which acts as the Proton acceptor. Glu171 serves as a coordination point for Zn(2+). Residue Asp218 is the Proton acceptor of the active site. His297 lines the Zn(2+) pocket. Leu306 is an alpha-D-mannopyranose binding site.

It belongs to the glutaminyl-peptide cyclotransferase family.

The protein localises to the secreted. The enzyme catalyses N-terminal L-glutaminyl-[peptide] = N-terminal 5-oxo-L-prolyl-[peptide] + NH4(+). Inhibited by imidazoles (imidazole, benzimidazole, 1-benzylimidazole, 1-methylimidazole, P150/03, N-omega-acetylhistamine and 4-methylimidazole) and cysteamines (cysteamine, N-dimethylcysteamine and N-diethylcysteamine). Partially inhibited by PDB50 1(3,4-dimethoxyphenyl)-3-(3-imidazol-1-ylpropyl)thiourea. In terms of biological role, acts as a glutaminyl-peptide cyclotransferase. Responsible for the biosynthesis of pyroglutamyl peptides. Might be more efficient in the conversion of tri and tetrapeptides in vitro. Might have a relative preference for substrates containing hydrophobic amino acids in vitro. In Drosophila melanogaster (Fruit fly), this protein is Glutaminyl-peptide cyclotransferase.